The following is a 209-amino-acid chain: ATP-dependent Clp protease proteolytic subunit (209 aa).

Serine 106 (nucleophile) is an active-site residue. Histidine 131 is an active-site residue.

The protein belongs to the peptidase S14 family. Fourteen ClpP subunits assemble into 2 heptameric rings which stack back to back to give a disk-like structure with a central cavity, resembling the structure of eukaryotic proteasomes.

The protein resides in the cytoplasm. The enzyme catalyses Hydrolysis of proteins to small peptides in the presence of ATP and magnesium. alpha-casein is the usual test substrate. In the absence of ATP, only oligopeptides shorter than five residues are hydrolyzed (such as succinyl-Leu-Tyr-|-NHMec, and Leu-Tyr-Leu-|-Tyr-Trp, in which cleavage of the -Tyr-|-Leu- and -Tyr-|-Trp bonds also occurs).. Functionally, cleaves peptides in various proteins in a process that requires ATP hydrolysis. Has a chymotrypsin-like activity. Plays a major role in the degradation of misfolded proteins. This is ATP-dependent Clp protease proteolytic subunit from Brucella canis (strain ATCC 23365 / NCTC 10854 / RM-666).